Reading from the N-terminus, the 193-residue chain is Ion-translocating oxidoreductase complex subunit A (193 aa).

6 helical membrane passes run 5–25, 47–67, 72–92, 102–122, 134–154, and 171–191; these read FFFI…FLGL, FVVV…LLPF, LRII…EIIL, ILGI…IPLF, ILYA…FSSI, and PIVL…KGLV.

This sequence belongs to the NqrDE/RnfAE family. As to quaternary structure, the complex is composed of six subunits: RnfA, RnfB, RnfC, RnfD, RnfE and RnfG.

The protein resides in the cell inner membrane. Functionally, part of a membrane-bound complex that couples electron transfer with translocation of ions across the membrane. The polypeptide is Ion-translocating oxidoreductase complex subunit A (Buchnera aphidicola subsp. Schizaphis graminum (strain Sg)).